The sequence spans 163 residues: Nucleotide-binding protein syc0675_c (163 aa).

This sequence belongs to the YajQ family.

Functionally, nucleotide-binding protein. This is Nucleotide-binding protein syc0675_c from Synechococcus sp. (strain ATCC 27144 / PCC 6301 / SAUG 1402/1) (Anacystis nidulans).